Reading from the N-terminus, the 648-residue chain is MADDTPRQRESISLTPVAHGLENMGAEFLEIMEEGQLPHRHSSLPEGGGSRSKAVWKPFSRWRSLQPTVQARSLCREHWQLFEWISKGLLSTAYIGFLIVACLLDFPRALALFVITCVVLVFLAYNLLKRLLGSKLKKCVKFQGHSCLSLWLKRGLALAAGLGVILWLSLDTAQRPEQLVSFAGICVFLVLLFAGSKHHRAVSWRAVSWGLGLQFVLGLFVIRTEPGFVAFQWLGDQIRVFLSYTEAGSSFVFGEALVKDVFAFQVLPIIVFFSCVMSVLYYLGLMQWVILKIAWLMQVTMGTSATETLSVAGNIFVSQTEAPLLIRPYLADMTLSEVHVVMTGGYATIAGSLLGAYISFGIDASSLIAASVMAAPCALALSKLVYPEVEESKFRSEEGVKLTYGDAQNLVEAASAGAAISVKVVANIAANLIAFLAVLAFINAALSWLGDMVDIQGLSFQLICSYVLRPVAFLMGVAWEDCPVVAELLGIKLFLNEFVAYQELSQYKQRRLAGAEEWLGDKKQWISVRAEILTTYALCGFANFSSIGIMLGGLTSMVPQRRSDFSQIVLRALITGAFVSLVNACVAGILYVPRGVEVDCMSLLNQTVSSSSFEVYLCCRQVFQNTSLEFGQEALHNCCRFYNHTVCT.

The Cytoplasmic portion of the chain corresponds to 1–83 (MADDTPRQRE…LCREHWQLFE (83 aa)). A helical transmembrane segment spans residues 84–104 (WISKGLLSTAYIGFLIVACLL). The Extracellular portion of the chain corresponds to 105–108 (DFPR). A helical transmembrane segment spans residues 109–129 (ALALFVITCVVLVFLAYNLLK). At 130–147 (RLLGSKLKKCVKFQGHSC) the chain is on the cytoplasmic side. The helical transmembrane segment at 148-168 (LSLWLKRGLALAAGLGVILWL) threads the bilayer. The Extracellular segment spans residues 169–175 (SLDTAQR). Residues 176–196 (PEQLVSFAGICVFLVLLFAGS) form a helical membrane-spanning segment. The Cytoplasmic segment spans residues 197–201 (KHHRA). Residues 202–222 (VSWRAVSWGLGLQFVLGLFVI) traverse the membrane as a helical segment. The Extracellular segment spans residues 223-265 (RTEPGFVAFQWLGDQIRVFLSYTEAGSSFVFGEALVKDVFAFQ). The chain crosses the membrane as a helical span at residues 266 to 286 (VLPIIVFFSCVMSVLYYLGLM). The Cytoplasmic portion of the chain corresponds to 287 to 294 (QWVILKIA). A helical transmembrane segment spans residues 295 to 318 (WLMQVTMGTSATETLSVAGNIFVS). Over 319–339 (QTEAPLLIRPYLADMTLSEVH) the chain is Extracellular. Residues 340–360 (VVMTGGYATIAGSLLGAYISF) traverse the membrane as a helical segment. Gly-361 is a topological domain (cytoplasmic). Residues 362–380 (IDASSLIAASVMAAPCALA) traverse the membrane as a helical segment. Topologically, residues 381–427 (LSKLVYPEVEESKFRSEEGVKLTYGDAQNLVEAASAGAAISVKVVAN) are extracellular. Residues 428 to 448 (IAANLIAFLAVLAFINAALSW) traverse the membrane as a helical segment. Topologically, residues 449–470 (LGDMVDIQGLSFQLICSYVLRP) are cytoplasmic. The helical transmembrane segment at 471–491 (VAFLMGVAWEDCPVVAELLGI) threads the bilayer. Topologically, residues 492-531 (KLFLNEFVAYQELSQYKQRRLAGAEEWLGDKKQWISVRAE) are extracellular. The helical transmembrane segment at 532–552 (ILTTYALCGFANFSSIGIMLG) threads the bilayer. The Cytoplasmic portion of the chain corresponds to 553–571 (GLTSMVPQRRSDFSQIVLR). The chain crosses the membrane as a helical span at residues 572–592 (ALITGAFVSLVNACVAGILYV). At 593-648 (PRGVEVDCMSLLNQTVSSSSFEVYLCCRQVFQNTSLEFGQEALHNCCRFYNHTVCT) the chain is on the extracellular side. Residues Asn-605, Asn-625, and Asn-643 are each glycosylated (N-linked (GlcNAc...) asparagine).

The protein belongs to the concentrative nucleoside transporter (CNT) (TC 2.A.41) family. Post-translationally, N-glycosylated. N-glycosylation is required for localization to the plasma membrane and the transporter activity.

Its subcellular location is the cell membrane. The protein resides in the apical cell membrane. The catalysed reaction is uridine(out) + Na(+)(out) = uridine(in) + Na(+)(in). The enzyme catalyses thymidine(out) + Na(+)(out) = thymidine(in) + Na(+)(in). It catalyses the reaction cytidine(out) + Na(+)(out) = cytidine(in) + Na(+)(in). It carries out the reaction adenosine(out) + Na(+)(out) = adenosine(in) + Na(+)(in). With respect to regulation, due to its high apparent affinity but slow transport, adenosine could act as a negative regulator of pyrimidine transport under some conditions. Its function is as follows. Sodium and pyrimidine nucleoside symporter of the plasma membrane that imports uridine, thymidine and cytidine into cells by coupling their transport to the transmembrane sodium electrochemical gradient. Also transports adenosine, an atypical substrate transported with high apparent affinity, but low maximum velocity. Therefore, exhibits the transport characteristics of the nucleoside transport system cit or N2 subtype (N2/cit). Involved in renal nucleoside (re)absorption. This chain is Sodium/nucleoside cotransporter 1, found in Mus musculus (Mouse).